Here is a 763-residue protein sequence, read N- to C-terminus: Phospholipid phosphatase-related protein type 4 (763 aa).

Residues 33–54 (VHTSPGGGRRPGQAAGMSAKER) are disordered. Serine 36 bears the Phosphoserine mark. 3 helical membrane passes run 67-87 (LPCF…SLYF), 119-139 (AIPF…TIMV), and 178-198 (FVGV…IIQL). Asparagine 214 and asparagine 219 each carry an N-linked (GlcNAc...) asparagine glycan. The chain crosses the membrane as a helical span at residues 247–267 (SFPSQHATLAAFAAVYVSMYF). N-linked (GlcNAc...) asparagine glycosylation is present at asparagine 268. Helical transmembrane passes span 276-296 (KLLK…CGLT) and 308-328 (VYCG…YAVG). At serine 346 the chain carries Phosphoserine. N-linked (GlcNAc...) asparagine glycosylation is present at asparagine 362. Serine 385 carries the phosphoserine modification. Asparagine 432 carries N-linked (GlcNAc...) asparagine glycosylation. Residue serine 438 is modified to Phosphoserine. An N-linked (GlcNAc...) asparagine glycan is attached at asparagine 455. The disordered stretch occupies residues 458–529 (RKLSLQVIEP…PRVSIQSRPG (72 aa)). Phosphoserine is present on residues serine 461 and serine 472. N-linked (GlcNAc...) asparagine glycosylation is found at asparagine 513, asparagine 543, and asparagine 568. Serine 606 bears the Phosphoserine mark. Positions 669 to 694 (DSESCESLKDSFGSGDRKRSNIDSNE) are enriched in basic and acidic residues. 2 disordered regions span residues 669-698 (DSES…HHHH) and 739-763 (ERSN…AYKD). Positions 740-749 (RSNSPENTRN) are enriched in polar residues.

The protein belongs to the PA-phosphatase related phosphoesterase family. Post-translationally, O-glycosylated. Probably at Ser-346. In terms of tissue distribution, expressed by glutamatergic neurons (at protein level).

The protein resides in the postsynaptic density membrane. Its function is as follows. Postsynaptic density membrane protein that indirectly regulates glutamatergic synaptic transmission through lysophosphatidic acid (LPA)-mediated signaling pathways. Binds lysophosphatidic acid (LPA) and mediates its internalization into cells. Could act as receptor or a transporter of this lipid at the post-synaptic membrane. Modulates lysophosphatidic acid (LPA) activity in neuron axonal outgrowth during development by attenuating phospholipid-induced axon collapse. This is Phospholipid phosphatase-related protein type 4 from Homo sapiens (Human).